The sequence spans 389 residues: Cuticlin-3 (389 aa).

A signal peptide spans methionine 1–alanine 19. Over isoleucine 20–serine 354 the chain is Extracellular. The 246-residue stretch at glutamate 33–glycine 278 folds into the ZP domain. N-linked (GlcNAc...) asparagine glycosylation is present at asparagine 284. The helical transmembrane segment at valine 355–valine 375 threads the bilayer. The Cytoplasmic portion of the chain corresponds to serine 376 to cysteine 389.

It localises to the cell membrane. Its function is as follows. Plays a role in alae formation in L1 larvae. The sequence is that of Cuticlin-3 from Caenorhabditis elegans.